Here is a 47-residue protein sequence, read N- to C-terminus: Ruminococcin-A (47 aa).

Positions 1–23 are cleaved as a signal peptide; it reads MRNDVLTLTNPMEEKELEQILGG. Thr-30 and Thr-39 each carry 2,3-didehydrobutyrine. A cross-link (beta-methyllanthionine (Thr-Cys)) is located at residues 30 to 35; it reads TISHEC. Positions 32–46 form a cross-link, lanthionine (Ser-Cys); the sequence is SHECNMNTWQFLFTC. The beta-methyllanthionine (Thr-Cys) cross-link spans 45-47; the sequence is TCC.

In terms of processing, maturation of lantibiotics involves the enzymatic conversion of Thr, and Ser into dehydrated AA and the formation of thioether bonds with cysteine. This is followed by membrane translocation and cleavage of the modified precursor. Post-translationally, it is not established whether the 2,3-didehydrobutyrine is the E- or Z-isomer.

Its subcellular location is the secreted. Its function is as follows. Lanthionine-containing peptide antibiotic (lantibiotic) active on Gram-positive bacteria. The bactericidal activity of lantibiotics is based on depolarization of energized bacterial cytoplasmic membranes, initiated by the formation of aqueous transmembrane pores. Ruminococcin A is a broad spectrum bacteriocin exhibiting activity against a wide range of pathogenic clostridia and B.longum. This chain is Ruminococcin-A (rumA1), found in Mediterraneibacter gnavus (Ruminococcus gnavus).